We begin with the raw amino-acid sequence, 585 residues long: Cytidine monophosphate-N-acetylneuraminic acid hydroxylase (585 aa).

Residues 9-107 (LSPVEVANLK…VEMDENNRLL (99 aa)) form the Rieske domain. Residues cysteine 49, histidine 51, cysteine 70, and histidine 73 each coordinate [2Fe-2S] cluster.

It belongs to the CMP-Neu5Ac hydroxylase family. The cofactor is [2Fe-2S] cluster.

The protein localises to the cytoplasm. The catalysed reaction is CMP-N-acetyl-beta-neuraminate + 2 Fe(II)-[cytochrome b5] + O2 + 2 H(+) = CMP-N-glycoloyl-beta-neuraminate + 2 Fe(III)-[cytochrome b5] + H2O. The protein operates within amino-sugar metabolism; N-acetylneuraminate metabolism. In terms of biological role, sialic acids are components of carbohydrate chains of glycoconjugates and are involved in cell-cell recognition and cell-pathogen interactions. Catalyzes the conversion of CMP-N-acetylneuraminic acid (CMP-Neu5Ac) into its hydroxylated derivative CMP-N-glycolylneuraminic acid (CMP-Neu5Gc), a sialic acid abundantly expressed at the surface of many cells. This Pongo pygmaeus (Bornean orangutan) protein is Cytidine monophosphate-N-acetylneuraminic acid hydroxylase (CMAH).